The sequence spans 285 residues: Ribosomal protein L11 methyltransferase (285 aa).

Residues threonine 131, glycine 154, aspartate 176, and asparagine 223 each coordinate S-adenosyl-L-methionine.

The protein belongs to the methyltransferase superfamily. PrmA family.

It is found in the cytoplasm. It carries out the reaction L-lysyl-[protein] + 3 S-adenosyl-L-methionine = N(6),N(6),N(6)-trimethyl-L-lysyl-[protein] + 3 S-adenosyl-L-homocysteine + 3 H(+). Its function is as follows. Methylates ribosomal protein L11. This is Ribosomal protein L11 methyltransferase from Brucella suis (strain ATCC 23445 / NCTC 10510).